The primary structure comprises 917 residues: Isoleucine--tRNA ligase (917 aa).

L-isoleucyl-5'-AMP-binding residues include Pro56, His67, Glu554, Gly555, Asp557, Gln558, and His585. The short motif at 57–67 is the 'HIGH' region element; the sequence is PYANGNLHMGH. The 'KMSKS' region signature appears at 595–599; that stretch reads KMSKS. ATP is bound at residue Lys598. 2 residues coordinate tRNA(Ile): Arg632 and Gln640. Zn(2+) contacts are provided by Cys886, Cys889, Cys906, and Cys909.

It belongs to the class-I aminoacyl-tRNA synthetase family. IleS type 1 subfamily. In terms of assembly, monomer. Requires Zn(2+) as cofactor.

It is found in the cytoplasm. It carries out the reaction tRNA(Ile) + L-isoleucine + ATP = L-isoleucyl-tRNA(Ile) + AMP + diphosphate. In terms of biological role, catalyzes the attachment of isoleucine to tRNA(Ile). As IleRS can inadvertently accommodate and process structurally similar amino acids such as valine, to avoid such errors it has two additional distinct tRNA(Ile)-dependent editing activities. One activity is designated as 'pretransfer' editing and involves the hydrolysis of activated Val-AMP. The other activity is designated 'posttransfer' editing and involves deacylation of mischarged Val-tRNA(Ile). This chain is Isoleucine--tRNA ligase (ileS), found in Staphylococcus aureus.